Reading from the N-terminus, the 217-residue chain is MSKSRAEAAAGAPGIVLRYLQEQNRPYSAQDVFGNLQKEHGLGKAAVVKALDQLAQQGKIKEKTYGKQKIYFADQDQFDTVSDADLHSLDASIMALTAKVQGLQQSCRHMEAELKELTSALTTPEMQTEIQELKKECARYTERLKNIKAATNHVTPEEKEKVYRERQKYCKEWRKRKRMTTELCDAILEGYPKSKKQFFEEVGIETDEDHNVTLPNP.

The interaction with NR3C1, homodimerization and transcriptional activation almost abolished when missing stretch occupies residues 89–117; it reads LDASIMALTAKVQGLQQSCRHMEAELKEL. Positions 93-153 form a coiled coil; that stretch reads IMALTAKVQG…LKNIKAATNH (61 aa). Residues 118–182 form a DNA-binding region; sequence TSALTTPEMQ…WRKRKRMTTE (65 aa). An interaction with NR3C1 decreased when missing region spans residues 118–182; sequence TSALTTPEMQ…WRKRKRMTTE (65 aa).

Belongs to the HOP2 family. Forms a stable heterodimer with MND1. Interacts with PSMC3/TBP1. Interacts with the DNA-binding domain of the nuclear receptors NR3C1/GR, ESR2/ER-beta, THRB and RXRA. Post-translationally, phosphorylated by PKA, PKC and MAPK.

It is found in the nucleus. In terms of biological role, plays an important role in meiotic recombination. Stimulates DMC1-mediated strand exchange required for pairing homologous chromosomes during meiosis. The complex PSMC3IP/MND1 binds DNA, stimulates the recombinase activity of DMC1 as well as DMC1 D-loop formation from double-strand DNA. This complex stabilizes presynaptic RAD51 and DMC1 filaments formed on single strand DNA to capture double-strand DNA. This complex stimulates both synaptic and presynaptic critical steps in RAD51 and DMC1-promoted homologous pairing. May inhibit HIV-1 viral protein TAT activity and modulate the activity of proteasomes through association with PSMC3. Plays a role as a coactivator in nuclear receptor-mediated transcription. The sequence is that of Homologous-pairing protein 2 homolog (Psmc3ip) from Rattus norvegicus (Rat).